The chain runs to 330 residues: MSDLAIPTISCTESDGKYGRFVVEPLEKGFGTTMGNSLRRILLSYLDGVAITRVRIDGIQHEFSALPKAKEDTLDFLLNLKNIRVESLSGLEGILYLKASGAKVVTAADIEPSNDFEVVNPELYLLTLDSDDAVLNVELEVELGRGYRAPESTENTPIGTIPVDAIFTPIRKVNFTTEPMHVGRETSLERLVLEVWTDGTIEPATAVSRSADILVKQFAALVSHNKVVAEVEASEPVKYAIPEEKYNMPIEQLDLSVRAVNCLRHAGITTVGEVINRGTKELLTLRNFGLKSLTELEDRLKTIGLSLNPEEELFEDAENSKKKNKGMDEA.

The alpha N-terminal domain (alpha-NTD) stretch occupies residues 1 to 225; that stretch reads MSDLAIPTIS…KQFAALVSHN (225 aa). The tract at residues 237-330 is alpha C-terminal domain (alpha-CTD); the sequence is VKYAIPEEKY…KKKNKGMDEA (94 aa).

This sequence belongs to the RNA polymerase alpha chain family. In terms of assembly, homodimer. The RNAP catalytic core consists of 2 alpha, 1 beta, 1 beta' and 1 omega subunit. When a sigma factor is associated with the core the holoenzyme is formed, which can initiate transcription.

It carries out the reaction RNA(n) + a ribonucleoside 5'-triphosphate = RNA(n+1) + diphosphate. In terms of biological role, DNA-dependent RNA polymerase catalyzes the transcription of DNA into RNA using the four ribonucleoside triphosphates as substrates. The sequence is that of DNA-directed RNA polymerase subunit alpha from Dehalococcoides mccartyi (strain ATCC BAA-2266 / KCTC 15142 / 195) (Dehalococcoides ethenogenes (strain 195)).